The primary structure comprises 176 residues: Ribosome rescue factor SmrB (176 aa).

Positions 97-172 (LDMHGMTQQE…GDGALLVLLS (76 aa)) constitute a Smr domain.

It belongs to the SmrB family. As to quaternary structure, associates with collided ribosomes, but not with correctly translating polysomes.

Functionally, acts as a ribosome collision sensor. Detects stalled/collided disomes (pairs of ribosomes where the leading ribosome is stalled and a second ribosome has collided with it) and endonucleolytically cleaves mRNA at the 5' boundary of the stalled ribosome. Stalled/collided disomes form a new interface (primarily via the 30S subunits) that binds SmrB. Cleaved mRNA becomes available for tmRNA ligation, leading to ribosomal subunit dissociation and rescue of stalled ribosomes. In Vibrio vulnificus (strain CMCP6), this protein is Ribosome rescue factor SmrB.